Consider the following 396-residue polypeptide: Putative glutamate--cysteine ligase 2-2 (396 aa).

Belongs to the glutamate--cysteine ligase type 2 family. YbdK subfamily.

The enzyme catalyses L-cysteine + L-glutamate + ATP = gamma-L-glutamyl-L-cysteine + ADP + phosphate + H(+). In terms of biological role, ATP-dependent carboxylate-amine ligase which exhibits weak glutamate--cysteine ligase activity. This is Putative glutamate--cysteine ligase 2-2 from Mycolicibacterium smegmatis (strain ATCC 700084 / mc(2)155) (Mycobacterium smegmatis).